The primary structure comprises 631 residues: Probable methyltransferase PMT16 (631 aa).

The Cytoplasmic segment spans residues 1-14 (MNLFTRISSRTKKA). The helical; Signal-anchor for type II membrane protein transmembrane segment at 15 to 35 (NLYYVTLVALLCIASYLLGIW) threads the bilayer. The Lumenal segment spans residues 36–631 (QNTAVNPRAA…EDKNNTSALS (596 aa)). Asn-61, Asn-230, and Asn-626 each carry an N-linked (GlcNAc...) asparagine glycan.

It belongs to the methyltransferase superfamily.

It is found in the endoplasmic reticulum membrane. The chain is Probable methyltransferase PMT16 from Arabidopsis thaliana (Mouse-ear cress).